We begin with the raw amino-acid sequence, 331 residues long: Threonine-phosphate decarboxylase (331 aa).

Residue Lys192 is modified to N6-(pyridoxal phosphate)lysine.

It belongs to the class-I pyridoxal-phosphate-dependent aminotransferase family. Homodimer. Requires pyridoxal 5'-phosphate as cofactor.

It is found in the cytoplasm. The catalysed reaction is O-phospho-L-threonine + H(+) = (R)-1-aminopropan-2-yl phosphate + CO2. It participates in cofactor biosynthesis; adenosylcobalamin biosynthesis. In terms of biological role, decarboxylates L-threonine-O-3-phosphate to yield (R)-1-amino-2-propanol O-2-phosphate, the precursor for the linkage between the nucleotide loop and the corrin ring in cobalamin. This is Threonine-phosphate decarboxylase (cobC) from Pseudomonas aeruginosa (strain ATCC 15692 / DSM 22644 / CIP 104116 / JCM 14847 / LMG 12228 / 1C / PRS 101 / PAO1).